The chain runs to 68 residues: ATP synthase protein 8 (68 aa).

The chain crosses the membrane as a helical span at residues 8-24; the sequence is VWPTIIMSMLLALFLLM. Residue Lys-54 is modified to N6-acetyllysine; alternate. Lys-54 carries the N6-succinyllysine; alternate modification. Lys-57 carries the N6-acetyllysine modification.

It belongs to the ATPase protein 8 family. In terms of assembly, F-type ATPases have 2 components, CF(1) - the catalytic core - and CF(0) - the membrane proton channel. Component of an ATP synthase complex composed of ATP5PB, ATP5MC1, ATP5F1E, ATP5PD, ATP5ME, ATP5PF, ATP5MF, MT-ATP6, MT-ATP8, ATP5F1A, ATP5F1B, ATP5F1D, ATP5F1C, ATP5PO, ATP5MG, ATP5MK and ATP5MJ. Interacts with PRICKLE3.

Its subcellular location is the mitochondrion membrane. In terms of biological role, mitochondrial membrane ATP synthase (F(1)F(0) ATP synthase or Complex V) produces ATP from ADP in the presence of a proton gradient across the membrane which is generated by electron transport complexes of the respiratory chain. F-type ATPases consist of two structural domains, F(1) - containing the extramembraneous catalytic core and F(0) - containing the membrane proton channel, linked together by a central stalk and a peripheral stalk. During catalysis, ATP synthesis in the catalytic domain of F(1) is coupled via a rotary mechanism of the central stalk subunits to proton translocation. Part of the complex F(0) domain. Minor subunit located with subunit a in the membrane. The polypeptide is ATP synthase protein 8 (MT-ATP8) (Hylobates lar (Lar gibbon)).